A 195-amino-acid chain; its full sequence is Cytochrome b-245 light chain (195 aa).

Residues 2-7 (GQIEWA) are Cytoplasmic-facing. A helical membrane pass occupies residues 8-30 (MWANEQALASGLILITGGIVATA). The Extracellular segment spans residues 31–35 (GRFTQ). Residues 36-53 (WYFGAYSIVAGVFVCLLE) traverse the membrane as a helical segment. Topologically, residues 54 to 69 (YPRGKRKKGSTMERWG) are cytoplasmic. An intramembrane segment occupies 70–80 (QKYMTAVVKLF). Topologically, residues 81-86 (GPFTRN) are cytoplasmic. The helical transmembrane segment at 87–104 (YYVRAVLHLLLSVPAGFL) threads the bilayer. A topological domain (extracellular) is located at residue leucine 105. A helical membrane pass occupies residues 106–126 (ATILGTACLAIASGIYLLAAV). Residues 127–195 (RGEQWTPIEP…NPIPVTDEVV (69 aa)) lie on the Cytoplasmic side of the membrane. Residues 134–195 (IEPKPRERPQ…NPIPVTDEVV (62 aa)) form a disordered region. A Phosphothreonine modification is found at threonine 147. A Glycyl lysine isopeptide (Lys-Gly) (interchain with G-Cter in ubiquitin) cross-link involves residue lysine 149. Serine 168 is subject to Phosphoserine.

Belongs to the p22phox family. As to quaternary structure, component of the phagocyte NADPH oxidase core complex/cytochrome b558 complex, composed of CYBB (heavy chain (beta)) and CYBA (light chain (alpha)). Component of the phagocyte NADPH oxidase complex composed of an obligatory core heterodimer formed by the membrane proteins CYBA and CYBB and the cytosolic regulatory subunits NCF1/p47-phox, NCF2/p67-phox, NCF4/p40-phox and the small GTPase RAC1 or RAC2. Interacts with NCF1 (via SH3 domain). Interacts with SH3PXD2A. Interacts with DUOX1, DUOX2 and TPO. Interacts with NOX4; this interaction mediates superoxide generation. Interacts with calprotectin (S100A8/9). Interacts with GBP7. Interacts with NOXO1. Forms a heterodimer with NOX3 and is essential for activity and cell membrane localization of NOX3. Interacts with NOX1. Post-translationally, phosphorylation at Thr-147 enhances NADPH oxidase activity by promoting NCF1/p47-phox binding. In terms of processing, ubiquitinated at Lys-149 likely by RNF145.

Its subcellular location is the cell membrane. In terms of biological role, subunit of NADPH oxidase complexes that is required for the NADPH oxidase activity that generates, in various cell types, superoxide from molecular oxygen utilizing NADPH as an electron donor. Subunit of the phagocyte NADPH oxidase complex that mediates the transfer of electrons from cytosolic NADPH to O2 to produce the superoxide anion (O2(-)). In the activated complex, electrons are first transferred from NADPH to flavin adenine dinucleotide (FAD) and subsequently transferred via two heme molecules to molecular oxygen, producing superoxide through an outer-sphere reaction. Activation of the NADPH oxidase complex is initiated by the assembly of cytosolic subunits of the NADPH oxidase complex with the core NADPH oxidase complex to form a complex at the plasma membrane or phagosomal membrane. This activation process is initiated by phosphorylation dependent binding of the cytosolic NCF1/p47-phox subunit to the C-terminus of CYBA/p22-phox. Aassociates with NOX3 to form a functional NADPH oxidase constitutively generating superoxide. The polypeptide is Cytochrome b-245 light chain (Homo sapiens (Human)).